We begin with the raw amino-acid sequence, 265 residues long: Cytochrome b-c1 complex subunit Rieske, mitochondrial (265 aa).

Residues 1–53 constitute a mitochondrion transit peptide; the sequence is MLRVAGRRLSSSAARSSSTFFTRSSFTVTDDSSPARSPSPSLTSSFLDQIRGF. Over 54 to 102 the chain is Mitochondrial matrix; that stretch reads SSNSVSPAHQLGLVSDLPATVAAIKNPSSKIVYDDSNHERYPPGDPSKR. A helical transmembrane segment spans residues 103–125; the sequence is AFAYFVLTGGRFVYASSVRLLIL. The Mitochondrial intermembrane segment spans residues 126–265; sequence KFVLSMSASK…FLEENKLLIG (140 aa). A Rieske domain is found at 175–263; that stretch reads IKLANSVDLG…YSFLEENKLL (89 aa). Residues Cys208, His210, Cys227, and His230 each coordinate [2Fe-2S] cluster. Residues Cys213 and Cys229 are joined by a disulfide bond.

Belongs to the Rieske iron-sulfur protein family. Component of the ubiquinol-cytochrome c oxidoreductase (cytochrome b-c1 complex, complex III, CIII), a multisubunit enzyme composed of 3 respiratory subunits cytochrome b, cytochrome c1 and Rieske protein, 2 core protein subunits, and several low-molecular weight protein subunits. The complex exists as an obligatory dimer and forms supercomplexes (SCs) in the inner mitochondrial membrane with cytochrome c oxidase (complex IV, CIV). [2Fe-2S] cluster is required as a cofactor.

It localises to the mitochondrion inner membrane. The enzyme catalyses a quinol + 2 Fe(III)-[cytochrome c](out) = a quinone + 2 Fe(II)-[cytochrome c](out) + 2 H(+)(out). In terms of biological role, component of the ubiquinol-cytochrome c oxidoreductase, a multisubunit transmembrane complex that is part of the mitochondrial electron transport chain which drives oxidative phosphorylation. The respiratory chain contains 3 multisubunit complexes succinate dehydrogenase (complex II, CII), ubiquinol-cytochrome c oxidoreductase (cytochrome b-c1 complex, complex III, CIII) and cytochrome c oxidase (complex IV, CIV), that cooperate to transfer electrons derived from NADH and succinate to molecular oxygen, creating an electrochemical gradient over the inner membrane that drives transmembrane transport and the ATP synthase. The cytochrome b-c1 complex catalyzes electron transfer from ubiquinol to cytochrome c, linking this redox reaction to translocation of protons across the mitochondrial inner membrane, with protons being carried across the membrane as hydrogens on the quinol. In the process called Q cycle, 2 protons are consumed from the matrix, 4 protons are released into the intermembrane space and 2 electrons are passed to cytochrome c. The Rieske protein is a catalytic core subunit containing a [2Fe-2S] iron-sulfur cluster. It cycles between 2 conformational states during catalysis to transfer electrons from the quinol bound in the Q(0) site in cytochrome b to cytochrome c1. The chain is Cytochrome b-c1 complex subunit Rieske, mitochondrial (FES1) from Solanum tuberosum (Potato).